The following is a 70-amino-acid chain: Large ribosomal subunit protein eL38 (70 aa).

Belongs to the eukaryotic ribosomal protein eL38 family.

The protein is Large ribosomal subunit protein eL38 (RpL38) of Spodoptera frugiperda (Fall armyworm).